The chain runs to 548 residues: Adenine deaminase (548 aa).

Belongs to the metallo-dependent hydrolases superfamily. Adenine deaminase family. It depends on Mn(2+) as a cofactor.

It carries out the reaction adenine + H2O + H(+) = hypoxanthine + NH4(+). This is Adenine deaminase from Borreliella burgdorferi (strain ATCC 35210 / DSM 4680 / CIP 102532 / B31) (Borrelia burgdorferi).